The following is a 401-amino-acid chain: Probable tRNA sulfurtransferase (401 aa).

Residues 63–168 (TTAEQALSCL…EREAFLYGAR (106 aa)) enclose the THUMP domain. Residues 186 to 187 (LL), 211 to 212 (YF), Arg268, Gly290, and Gln299 each bind ATP.

The protein belongs to the ThiI family.

The protein resides in the cytoplasm. It carries out the reaction [ThiI sulfur-carrier protein]-S-sulfanyl-L-cysteine + a uridine in tRNA + 2 reduced [2Fe-2S]-[ferredoxin] + ATP + H(+) = [ThiI sulfur-carrier protein]-L-cysteine + a 4-thiouridine in tRNA + 2 oxidized [2Fe-2S]-[ferredoxin] + AMP + diphosphate. The catalysed reaction is [ThiS sulfur-carrier protein]-C-terminal Gly-Gly-AMP + S-sulfanyl-L-cysteinyl-[cysteine desulfurase] + AH2 = [ThiS sulfur-carrier protein]-C-terminal-Gly-aminoethanethioate + L-cysteinyl-[cysteine desulfurase] + A + AMP + 2 H(+). It functions in the pathway cofactor biosynthesis; thiamine diphosphate biosynthesis. Functionally, catalyzes the ATP-dependent transfer of a sulfur to tRNA to produce 4-thiouridine in position 8 of tRNAs, which functions as a near-UV photosensor. Also catalyzes the transfer of sulfur to the sulfur carrier protein ThiS, forming ThiS-thiocarboxylate. This is a step in the synthesis of thiazole, in the thiamine biosynthesis pathway. The sulfur is donated as persulfide by IscS. This chain is Probable tRNA sulfurtransferase, found in Treponema pallidum subsp. pallidum (strain SS14).